A 97-amino-acid chain; its full sequence is U6-theraphotoxin-Hhn1a 4 (97 aa).

The N-terminal stretch at 1–33 (MLIKQFSRRSKNMKVQILLAFAALFVLAVGSYA) is a signal peptide. Positions 34–61 (SESKKLDLRDALLSAMFSADYQLNPQER) are excised as a propeptide. Cystine bridges form between Cys63-Cys77, Cys70-Cys82, and Cys76-Cys89.

This sequence belongs to the neurotoxin 10 (Hwtx-1) family. 12 (Hntx-12) subfamily. In terms of tissue distribution, expressed by the venom gland.

It is found in the secreted. Its function is as follows. Ion channel inhibitor. The sequence is that of U6-theraphotoxin-Hhn1a 4 from Cyriopagopus hainanus (Chinese bird spider).